A 514-amino-acid chain; its full sequence is MKIDEFQGYLELDRSWQDSFLYPLSFQEYIYALAHDHGLNRTILLENAGYENKYNFLIVKRLIIRMYRQNQFILSTNDFQQNIFFASPQKIYSQVIAEVFSVIVEIPFSLRLLFSLEGKQIRKSHNLRSIHSIFPFLEDQFSHLNYVLDIRIPHPVHLEILVQTLRYWVKDAPSLHLLRFFLYESHNWNSFFSLKKNISFLKKRNQRFFLFLYNSHVCEYESIFFFICNQSSHLQSTFYGSLIERIHFYGKVEHLVKVFTKNFQVILWFFQDPLMHYVRYQGKSILASKATSLLINKWKYYLVNFWQCYFSVWSQPKRIYINQLSKNSLDFTGFLSSVCLNTSVVRSQMLENSFIMDNAINKFDTIVPSIPLIGSLSKAKFCNVLGHPISKPVWTDLSDSEIIDRFGXICRSISHYYSGSSKKTSLYRIKYILRLSCARTLARKHKSTVRSFLKRLGSEFLEEFFTEEEKVLSFLLPRDYSISQRLYRGRIWYLDIFCIHDFANHEWLVMRLSK.

The protein belongs to the intron maturase 2 family. MatK subfamily.

It localises to the plastid. Its subcellular location is the chloroplast. In terms of biological role, usually encoded in the trnK tRNA gene intron. Probably assists in splicing its own and other chloroplast group II introns. This is Maturase K from Drosophyllum lusitanicum (Portuguese sundew).